The primary structure comprises 306 residues: Pantothenate kinase (306 aa).

Glycine 91–serine 98 contacts ATP.

The protein belongs to the prokaryotic pantothenate kinase family.

The protein resides in the cytoplasm. It carries out the reaction (R)-pantothenate + ATP = (R)-4'-phosphopantothenate + ADP + H(+). It participates in cofactor biosynthesis; coenzyme A biosynthesis; CoA from (R)-pantothenate: step 1/5. The protein is Pantothenate kinase of Streptococcus pneumoniae (strain JJA).